The primary structure comprises 469 residues: UDP-N-acetylmuramate--L-alanine ligase (469 aa).

Position 114 to 120 (114 to 120 (GTHGKTT)) interacts with ATP.

This sequence belongs to the MurCDEF family.

It is found in the cytoplasm. The enzyme catalyses UDP-N-acetyl-alpha-D-muramate + L-alanine + ATP = UDP-N-acetyl-alpha-D-muramoyl-L-alanine + ADP + phosphate + H(+). It functions in the pathway cell wall biogenesis; peptidoglycan biosynthesis. Cell wall formation. The sequence is that of UDP-N-acetylmuramate--L-alanine ligase from Chlorobium phaeovibrioides (strain DSM 265 / 1930) (Prosthecochloris vibrioformis (strain DSM 265)).